A 116-amino-acid chain; its full sequence is Large ribosomal subunit protein uL18 (116 aa).

Belongs to the universal ribosomal protein uL18 family. As to quaternary structure, part of the 50S ribosomal subunit; part of the 5S rRNA/L5/L18/L25 subcomplex. Contacts the 5S and 23S rRNAs.

In terms of biological role, this is one of the proteins that bind and probably mediate the attachment of the 5S RNA into the large ribosomal subunit, where it forms part of the central protuberance. The protein is Large ribosomal subunit protein uL18 of Saccharophagus degradans (strain 2-40 / ATCC 43961 / DSM 17024).